We begin with the raw amino-acid sequence, 131 residues long: MSIQYTTVGDLKVGSYVMIDGEPCRVVEITKAKTGKHGSAKANVVAIGLFTGQKRSLMAPVDQQVEVPIIEKHVGQILADKGDNLTIMDLESYETFDLEKPTENEIVSKIRPGAEIEYWSVMGRRKIVRVK.

At Lys-36 the chain carries Hypusine.

The protein belongs to the eIF-5A family. In terms of processing, the N-terminus is blocked.

The protein resides in the cytoplasm. Functionally, functions by promoting the formation of the first peptide bond. This Sulfolobus acidocaldarius (strain ATCC 33909 / DSM 639 / JCM 8929 / NBRC 15157 / NCIMB 11770) protein is Translation initiation factor 5A (eif5a).